We begin with the raw amino-acid sequence, 485 residues long: Cysteine--tRNA ligase (485 aa).

Position 29 (Cys-29) interacts with Zn(2+). Residues 31 to 41 (ATVQGMPHVGH) carry the 'HIGH' region motif. Residues 174 to 198 (QRVEDMQDAPDADPRGKRDPHDFAL) are disordered. A compositionally biased stretch (basic and acidic residues) spans 185–197 (ADPRGKRDPHDFA). Cys-227, His-252, and Glu-256 together coordinate Zn(2+). The 'KMSKS' region signature appears at 283–287 (KMSKS). An ATP-binding site is contributed by Lys-286.

Belongs to the class-I aminoacyl-tRNA synthetase family. Monomer. Requires Zn(2+) as cofactor.

It localises to the cytoplasm. The enzyme catalyses tRNA(Cys) + L-cysteine + ATP = L-cysteinyl-tRNA(Cys) + AMP + diphosphate. The protein is Cysteine--tRNA ligase of Micrococcus luteus (strain ATCC 4698 / DSM 20030 / JCM 1464 / CCM 169 / CCUG 5858 / IAM 1056 / NBRC 3333 / NCIMB 9278 / NCTC 2665 / VKM Ac-2230) (Micrococcus lysodeikticus).